Reading from the N-terminus, the 740-residue chain is Phosphoribosylformylglycinamidine synthase subunit PurL (740 aa).

H53 is an active-site residue. Y56 and K95 together coordinate ATP. E97 contacts Mg(2+). Residues 98 to 101 (SHNH) and R120 each bind substrate. Catalysis depends on H99, which acts as the Proton acceptor. Position 121 (D121) interacts with Mg(2+). Position 244 (Q244) interacts with substrate. D272 is a Mg(2+) binding site. Substrate is bound at residue 316-318 (ESQ). Positions 497 and 534 each coordinate ATP. N535 contacts Mg(2+). S537 serves as a coordination point for substrate.

This sequence belongs to the FGAMS family. In terms of assembly, monomer. Part of the FGAM synthase complex composed of 1 PurL, 1 PurQ and 2 PurS subunits.

It localises to the cytoplasm. It carries out the reaction N(2)-formyl-N(1)-(5-phospho-beta-D-ribosyl)glycinamide + L-glutamine + ATP + H2O = 2-formamido-N(1)-(5-O-phospho-beta-D-ribosyl)acetamidine + L-glutamate + ADP + phosphate + H(+). It participates in purine metabolism; IMP biosynthesis via de novo pathway; 5-amino-1-(5-phospho-D-ribosyl)imidazole from N(2)-formyl-N(1)-(5-phospho-D-ribosyl)glycinamide: step 1/2. In terms of biological role, part of the phosphoribosylformylglycinamidine synthase complex involved in the purines biosynthetic pathway. Catalyzes the ATP-dependent conversion of formylglycinamide ribonucleotide (FGAR) and glutamine to yield formylglycinamidine ribonucleotide (FGAM) and glutamate. The FGAM synthase complex is composed of three subunits. PurQ produces an ammonia molecule by converting glutamine to glutamate. PurL transfers the ammonia molecule to FGAR to form FGAM in an ATP-dependent manner. PurS interacts with PurQ and PurL and is thought to assist in the transfer of the ammonia molecule from PurQ to PurL. The polypeptide is Phosphoribosylformylglycinamidine synthase subunit PurL (Rhodospirillum rubrum (strain ATCC 11170 / ATH 1.1.1 / DSM 467 / LMG 4362 / NCIMB 8255 / S1)).